A 383-amino-acid chain; its full sequence is S-(hydroxymethyl)glutathione dehydrogenase (383 aa).

Residue cysteine 51 participates in Zn(2+) binding. Histidine 52 is an NAD(+) binding site. 7 residues coordinate Zn(2+): histidine 73, glutamate 74, cysteine 103, cysteine 106, cysteine 109, cysteine 117, and cysteine 180. NAD(+) contacts are provided by residues 205–210 (GAGCVG), aspartate 229, and 298–300 (IGV).

Belongs to the zinc-containing alcohol dehydrogenase family. Class-III subfamily. Zn(2+) is required as a cofactor.

It catalyses the reaction a primary alcohol + NAD(+) = an aldehyde + NADH + H(+). It carries out the reaction a secondary alcohol + NAD(+) = a ketone + NADH + H(+). The enzyme catalyses S-(hydroxymethyl)glutathione + NADP(+) = S-formylglutathione + NADPH + H(+). The catalysed reaction is S-(hydroxymethyl)glutathione + NAD(+) = S-formylglutathione + NADH + H(+). It catalyses the reaction S-nitrosoglutathione + NADH + H(+) = S-(hydroxysulfenamide)glutathione + NAD(+). Oxidizes long-chain alcohols and, in the presence of glutathione, is able to oxidize formaldehyde. Also acts as a S-nitroso-glutathione reductase by catalyzing the NADH-dependent reduction of S-nitrosoglutathione, thereby regulating protein S-nitrosylation. The chain is S-(hydroxymethyl)glutathione dehydrogenase (FDH1) from Aspergillus oryzae (strain ATCC 42149 / RIB 40) (Yellow koji mold).